The chain runs to 1327 residues: P-glycoprotein 14 (1327 aa).

The segment covering 1-17 (MAPKDDPDNRGFDDQRR) has biased composition (basic and acidic residues). The disordered stretch occupies residues 1–23 (MAPKDDPDNRGFDDQRRPSQRST). At 1-104 (MAPKDDPDNR…RYGKKFDYLL (104 aa)) the chain is on the cytoplasmic side. The helical transmembrane segment at 105–125 (LFIGTICAIISGVSQPILALV) threads the bilayer. Residues 106–394 (FIGTICAIIS…ISPHMMVLLN (289 aa)) enclose the ABC transmembrane type-1 1 domain. Residues 126–151 (SGRVTNALLVYPPTSKQFRNKANENV) lie on the Extracellular side of the membrane. Residues 152 to 172 (YIFLGIGIFISITNFIQYMCF) form a helical membrane-spanning segment. At 173–225 (QHCCTRVMAQMRHRFVYSVLRQNAGWFDKNHSGTITTKLNDSMERIREGIGDK) the chain is on the cytoplasmic side. Residues 226–246 (LGVLLRGFAMLIAAIVVAYIY) traverse the membrane as a helical segment. E247 is a topological domain (extracellular). Residues 248-268 (WRLASMMLGVAPTCCICMSLL) traverse the membrane as a helical segment. The Cytoplasmic segment spans residues 269 to 331 (ARQMTSTTIK…KFAVWKGFWS (63 aa)). Residues 332–352 (GFFGGLFFFWLFSFLGCGMLY) form a helical membrane-spanning segment. The Extracellular portion of the chain corresponds to 353-364 (GAYLLKVGIITT). The chain crosses the membrane as a helical span at residues 365–385 (PGDVFIVVMSMLLGAYFLGLI). The Cytoplasmic portion of the chain corresponds to 386 to 766 (SPHMMVLLNA…NAKGNYLYMF (381 aa)). In terms of domain architecture, ABC transporter 1 spans 429–665 (VKFENVHFRY…GGRYFDLVKA (237 aa)). ATP is bound at residue 464–471 (GHSGCGKS). The tract at residues 671-721 (DPEATEEFEEEEIDLDDTSRSSRRSSMTSARSGSEAFRRGNSLNDSFSGSK) is disordered. Residues 673–686 (EATEEFEEEEIDLD) are compositionally biased toward acidic residues. Residues 694 to 704 (RSSMTSARSGS) show a composition bias toward low complexity. Residues 711 to 721 (NSLNDSFSGSK) show a composition bias toward polar residues. One can recognise an ABC transmembrane type-1 2 domain in the interval 766–1053 (FLGTVFALIR…SAQYFPEFVK (288 aa)). Residues 767–789 (LGTVFALIRGLELPALALIFGWV) form a helical membrane-spanning segment. The Extracellular portion of the chain corresponds to 790–805 (FEGFTFVPYGGRMMHR). Residues 806–826 (MAMAVIAFASVGVGVWFSQLA) traverse the membrane as a helical segment. Over 827-886 (SSVLFAVVSENLSMRFRVQSFRNLLYQDASYFDNPAHAPGKLITRLASDAPNIKAVVDAR) the chain is Cytoplasmic. The helical transmembrane segment at 887 to 907 (MLQVIYALAAIIANIAIAFIY) threads the bilayer. The Extracellular segment spans residues 908–910 (CWQ). The chain crosses the membrane as a helical span at residues 911 to 931 (IGILGTSLILLLAFVMIGLAY). The Cytoplasmic segment spans residues 932–996 (KISLMNVEQI…KGMIEAINYS (65 aa)). A helical membrane pass occupies residues 997–1017 (LTQSFMYFMMCFTYAVGIRII). Residues 1018–1030 (YQGDKSSDDTFKG) lie on the Extracellular side of the membrane. The chain crosses the membrane as a helical span at residues 1031 to 1051 (IIAMMLGAVAVMNSAQYFPEF). The Cytoplasmic segment spans residues 1052–1327 (VKAKTAAGML…KLIKKQDLAV (276 aa)). Residues 1086–1322 (ILFENVKFSY…KGRYYKLIKK (237 aa)) enclose the ABC transporter 2 domain. 1121–1128 (GPSGSGKS) contacts ATP.

It belongs to the ABC transporter superfamily. ABCB family. Multidrug resistance exporter (TC 3.A.1.201) subfamily. In terms of tissue distribution, expressed in pharyngeal epithelial cells that surround the anterior pharyngeal cuticle. Shares same expression pattern as sms-5.

It localises to the apical cell membrane. Contributes to the establishment of a polar lipid barrier to block small molecule passage into the pharyngeal cuticle. Probably exports polar lipids into the developing pharyngeal cuticle to protect against xenobiotic insult. Likely functions in the same pathway as sphingomyelin synthase sms-5. The chain is P-glycoprotein 14 from Caenorhabditis elegans.